Reading from the N-terminus, the 143-residue chain is Large ribosomal subunit protein uL16 (143 aa).

Belongs to the universal ribosomal protein uL16 family. In terms of assembly, part of the 50S ribosomal subunit.

Binds 23S rRNA and is also seen to make contacts with the A and possibly P site tRNAs. This Tropheryma whipplei (strain TW08/27) (Whipple's bacillus) protein is Large ribosomal subunit protein uL16.